An 820-amino-acid polypeptide reads, in one-letter code: MALLRDVSLQDPRDRFELLQRVGAGTYGDVYKARDTVTSELAAVKIVKLDPGDDISSLQQEITILRECRHPNVVAYIGSYLRNDRLWICMEFCGGGSLQEIYHATGPLEERQIAYVCREALKGLHHLHSQGKIHRDIKGANLLLTLQGDVKLADFGVSGELTASVAKRRSFIGTPYWMAPEVAAVERKGGYNELCDVWALGITAIELGELQPPLFHLHPMRALMLMSKSSFQPPKLRDKTRWTQNFHHFLKLALTKNPKKRPTAEKLLQHPFTTQQLPRALLTQLLDKASDPHLGTPSPEDCELETYDMFPDTIHSRGQHGPAERTPSEIQFHQVKFGAPRRKETDPLNEPWEEEWTLLGKEELSGSLLQSVQEALEERSLTIRSASEFQELDSPDDTMGTIKRAPFLGPLPTDPPAEEPLSSPPGTLPPPPSGPNSSPLLPTAWATMKQREDPERSSCHGLPPTPKVHMGACFSKVFNGCPLRIHAAVTWIHPVTRDQFLVVGAEEGIYTLNLHELHEDTLEKLISHRCSWLYCVNNVLLSLSGKSTHIWAHDLPGLFEQRRLQQQVPLSIPTNRLTQRIIPRRFALSTKIPDTKGCLQCRVVRNPYTGATFLLAALPTSLLLLQWYEPLQKFLLLKNFSSPLPSPAGMLEPLVLDGKELPQVCVGAEGPEGPGCRVLFHVLPLEAGLTPDILIPPEGIPGSAQQVIQVDRDTILVSFERCVRIVNMQGEPTATLAPELTFDFPIETVVCLQDSVLAFWSHGMQGRSLDTNEVTQEITDETRIFRVLGAHRDIILESIPTDNPEAHSNLYILTGHQSTY.

In terms of domain architecture, Protein kinase spans 16 to 273 (FELLQRVGAG…AEKLLQHPFT (258 aa)). Residues 22 to 30 (VGAGTYGDV) and lysine 45 contribute to the ATP site. Catalysis depends on aspartate 136, which acts as the Proton acceptor. The tract at residues 294 to 314 (LGTPSPEDCELETYDMFPDTI) is PEST1. Serine 328 is subject to Phosphoserine. Positions 344-360 (ETDPLNEPWEEEWTLLG) are PEST2. The interval 387–442 (SEFQELDSPDDTMGTIKRAPFLGPLPTDPPAEEPLSSPPGTLPPPPSGPNSSPLLP) is disordered. Serine 394 is subject to Phosphoserine. A PEST3 region spans residues 405 to 448 (APFLGPLPTDPPAEEPLSSPPGTLPPPPSGPNSSPLLPTAWATM). A compositionally biased stretch (pro residues) spans 422–434 (SSPPGTLPPPPSG). The 312-residue stretch at 482 to 793 (PLRIHAAVTW…IFRVLGAHRD (312 aa)) folds into the CNH domain.

Belongs to the protein kinase superfamily. STE Ser/Thr protein kinase family. STE20 subfamily. In terms of assembly, interacts with TRAF2, TRAF6, MAP3K1/MEKK1 and MAP3K11/MLK3. Interacts with RAB8A. Requires Mg(2+) as cofactor. Polyubiquitinated through 'Lys-48'-polyubiquitin chains, allowing proteasomal turnover. Ubiquitination requires the kinase activity of MAP4K2/GCK. In terms of processing, autophosphorylated in response to tumor necrosis factor (TNF), endotoxins or pro-inflammatory stimuli. Autophosphorylation leads to activation. As to expression, highly expressed in germinal center but not mantle zone B-cells. Also expressed in lung, brain and placenta and at lower levels in other tissues examined.

It is found in the cytoplasm. The protein resides in the basolateral cell membrane. The protein localises to the golgi apparatus membrane. The catalysed reaction is L-seryl-[protein] + ATP = O-phospho-L-seryl-[protein] + ADP + H(+). It catalyses the reaction L-threonyl-[protein] + ATP = O-phospho-L-threonyl-[protein] + ADP + H(+). Its activity is regulated as follows. The tumor necrosis factor (TNF), as well as endotoxins and pro-inflammatory stimuli such as polyinosine-polycytidine (poly(IC)), lipopolysaccharides (LPS), peptidoglycan (PGN), flagellin, or lipid A activate MAP4K2 by promoting its autophosphorylation. In terms of biological role, serine/threonine-protein kinase which acts as an essential component of the MAP kinase signal transduction pathway. Acts as a MAPK kinase kinase kinase (MAP4K) and is an upstream activator of the stress-activated protein kinase/c-Jun N-terminal kinase (SAP/JNK) signaling pathway and to a lesser extent of the p38 MAPKs signaling pathway. Required for the efficient activation of JNKs by TRAF6-dependent stimuli, including pathogen-associated molecular patterns (PAMPs) such as polyinosine-polycytidine (poly(IC)), lipopolysaccharides (LPS), lipid A, peptidoglycan (PGN), or bacterial flagellin. To a lesser degree, IL-1 and engagement of CD40 also stimulate MAP4K2-mediated JNKs activation. The requirement for MAP4K2/GCK is most pronounced for LPS signaling, and extends to LPS stimulation of c-Jun phosphorylation and induction of IL-8. Enhances MAP3K1 oligomerization, which may relieve N-terminal mediated MAP3K1 autoinhibition and lead to activation following autophosphorylation. Also mediates the SAP/JNK signaling pathway and the p38 MAPKs signaling pathway through activation of the MAP3Ks MAP3K10/MLK2 and MAP3K11/MLK3. May play a role in the regulation of vesicle targeting or fusion. regulation of vesicle targeting or fusion. Activator of the Hippo signaling pathway which plays a pivotal role in organ size control and tumor suppression by restricting proliferation and promoting apoptosis. MAP4Ks act in parallel to and are partially redundant with STK3/MST2 and STK4/MST2 in the phosphorylation and activation of LATS1/2, and establish MAP4Ks as components of the expanded Hippo pathway. In Homo sapiens (Human), this protein is Mitogen-activated protein kinase kinase kinase kinase 2.